A 233-amino-acid polypeptide reads, in one-letter code: Cell number regulator 8 (233 aa).

2 consecutive transmembrane segments (helical) span residues 85 to 101 and 115 to 138; these read VCLL…GSNV and CLPY…APWF.

This sequence belongs to the cornifelin family. In terms of tissue distribution, expressed in roots, coleoptiles, leaves, stalks, apical meristems, immature ears, embryos, endosperm, pericarp, silks, tassel spikelets and pollen. Highest expression in the pericarp and stalks.

It localises to the membrane. The chain is Cell number regulator 8 (CNR8) from Zea mays (Maize).